Reading from the N-terminus, the 529-residue chain is Non-reducing end alpha-L-arabinofuranosidase BoGH43B (529 aa).

An N-terminal signal peptide occupies residues 1 to 23; sequence MMKNSCRLLLILIGLWMANVSLA. Asp38 acts as the Proton acceptor in catalysis. Glu198 serves as the catalytic Proton donor.

It belongs to the glycosyl hydrolase 43 family.

The protein localises to the periplasm. It carries out the reaction Hydrolysis of terminal non-reducing alpha-L-arabinofuranoside residues in alpha-L-arabinosides.. It functions in the pathway glucan metabolism; xyloglucan degradation. In terms of biological role, alpha-L-arabinofuranosidase involved in xyloglucan degradation by mediating the cleavage of terminal non-reducing alpha-L-arabinofuranoside residues in xyloglucan branches, converting the 'S' units to 'X' units. The polypeptide is Non-reducing end alpha-L-arabinofuranosidase BoGH43B (Bacteroides ovatus (strain ATCC 8483 / DSM 1896 / JCM 5824 / BCRC 10623 / CCUG 4943 / NCTC 11153)).